A 466-amino-acid chain; its full sequence is Soluble pyridine nucleotide transhydrogenase (466 aa).

36 to 45 (ERYQNVGGGC) provides a ligand contact to FAD.

It belongs to the class-I pyridine nucleotide-disulfide oxidoreductase family. The cofactor is FAD.

Its subcellular location is the cytoplasm. The catalysed reaction is NAD(+) + NADPH = NADH + NADP(+). Functionally, conversion of NADPH, generated by peripheral catabolic pathways, to NADH, which can enter the respiratory chain for energy generation. This is Soluble pyridine nucleotide transhydrogenase from Escherichia coli O81 (strain ED1a).